Consider the following 1998-residue polypeptide: MVKLANPLYTQWILEAIKKVKKQKQRPSEERICNAVSSSHGLDRKTVLEQLELSVKDGTILKVSNKGLNSYKDPDNPGRIALPKPRNHGKLDNKQSVDWNKLLKRAFEGLAESGGSTLKSIERFLKSQKDVSAACGGTAASGFHQQLRLAIKRAVGHGRLLKDGPLYRLNTKAANAEGKEGCESLSCLPPVSLLPHEKDKPVAEPIPICSFCLGTKEQNREKKPEDLISCADCGNSGHPSCLKFSPELTVRVRALRWQCIECKTCSSCRDQGKNADNMLFCDSCDRGFHMECCDPPLTRMPKGMWICQICRPRKKGRKLLQKKAAQIKRRYANPIGRPKNRLKKQSTVSKGPFSKVRTGPGRGRKRKITVSSQSASSSEEGYLERIDGLDFCRDSSAPLKFNKKTKGLIDGLTKFFTPSPDGRKARGEAVDYSELRIRKKGNRKSSTSHWPTDNQDGWESKQESEERLFGSQEIMTERDMELFRDIQEQALQKVGVTGPPDPQVRCPSVIEFGKYEIHTWYSSPYPQEYSRLPKLYLCEFCLKYMKSRTILQQHMKKCGWFHPPANEIYRKNNISVFEVDGNVSTIYCQNLCLLAKLFLDHKTLYYDVEPFLFYVLTQNDVKGCHLVGYFSKEKHCQQKYNVSCIMILPQYQRKGYGRFLIDFSYLLSKREGQAGSPEKPLSDLGRLSYMAYWKSVILECLYHQNDKQISIKKLSKLTGVCPQDITSTLHHLRMLDFRSDQFVIIRREKLIQDHMAKLQLNLRPVDVDPECLRWTPVIVSNSVVSEEEDEEADDGEKEEPQGQERELETRERVGKSVSRENKDQDSSSLIESEKKPEVKELASSSRLSKQALVRDSLPANSQPPRRGRCGRKNRKTQERFGDKDSKMLVGETLSTSQEQYGECEEKSAASRERYTEVGEQPAAPQAQADGNPDIPKGRFSESADLWRGQLKKSPETLKCRLPEGNDRLPCCYTDGDRAVFRGFSESSEEEEEPESPRSNSPPVLTKPTLKRKKPILHRRRRVRKRKHHNSSVVTETISETTEVLDEPFEDSDSERPMPRLEPTFEIEEEEEEEDENELFPRGYFHCLSSQDILRCQASSKRTASKDEEEEEEESDDADDTPVLKPVSLLRKCDVNSASLEPDTSTPMKKKKGWPKGKSRKPIHWKKRPGRKPGFKLNQDIIAVSTQECIVEPIVPIKPGRKPRTQESEELVEVKEGLVEERKEEMHTEADEEAEEEEDAASSDIRAMSPLDSSNSPDADPKEPEAEEEEEKPLDDPRQSEEEPQELEEQEQEEEDEVTAEANQNEDHDADDEDDGHLDSLKTKEPEGQPAREDGTEEPGTQESFLDASIQDSRENAKDKDETEADSEEEQPSHEASVGSETMPGSEEDHEEDSNTKEELIELKEEEEIPHSELDLETVQAVQSLTQEESSEHEGAYQDCEETLAACQTLQSYTHTDEDPQMSMVEDCHASEHNSPISSIPSHPSQSVRSVSSPSMPALESGYTQISPEQGSLSAPSMQNMETSPMMDVPSVSDHSQQVVDSGFSDLGSIESTTENYENPSSYDSTMGSSICGNNSSQSSCSYGGLSSSSSLTQNSCVVTQQMASMGNSCSMLQQNSVQPATNCNIKSPQTCVVERPPSNQQPPPPPPPPPPPQQPQPQPQQQAAPQPPPPQPQQQPPPPPQQQPQPPPPPQQQPPLSQCSMNNSFTAAPMIMEIPESGGTGNISIYERIPGDFGAGSYSQPSATFSLAKLQQLTNTIMDPHAMPYSHSPAVTSYATSVSLSNTGLAQLAPSHPLAGTPQAQATMTPPPNLAPTTMNLTSPLLQCNMSATNIGIPHTQRLQGQMPVKGHISIRSKSAPLPSATAHQQQLYGRSPPAVAMQAGPRALAVQRGMNMGVNLMPTPAYNVNSMNMNTLNAMNSYRMTQPMMNSSYHSNPAYMNQTAQYPMQMQMGMMGSQAYTQQPMQPNPHGNMMYTGPSHHSYMNAAGVPKQSLNGPYMRR.

In terms of domain architecture, SAMD1-like winged helix (WH) spans 1-77 (MVKLANPLYT…LNSYKDPDNP (77 aa)). The segment at 1–144 (MVKLANPLYT…CGGTAASGFH (144 aa)) is required for activation of RUNX1-1. Positions 52-166 (ELSVKDGTIL…HGRLLKDGPL (115 aa)) are required for nuclear localization. The disordered stretch occupies residues 72 to 93 (KDPDNPGRIALPKPRNHGKLDN). Positions 95-171 (QSVDWNKLLK…KDGPLYRLNT (77 aa)) constitute an H15 domain. The interaction with PML stretch occupies residues 144-662 (HQQLRLAIKR…RKGYGRFLID (519 aa)). K172 carries the post-translational modification N6-acetyllysine. 2 PHD-type zinc fingers span residues 199–258 (DKPV…LRWQ) and 255–306 (LRWQ…GMWI). Residues 312 to 662 (PRKKGRKLLQ…RKGYGRFLID (351 aa)) form an interaction with RUNX1-1 region. The tract at residues 336–377 (GRPKNRLKKQSTVSKGPFSKVRTGPGRGRKRKITVSSQSASS) is disordered. Residues K350 and K355 each carry the N6-acetyllysine modification. T369 carries the post-translational modification Phosphothreonine; by PKB/AKT1. A Phosphoserine modification is found at S419. The tract at residues 440-464 (KGNRKSSTSHWPTDNQDGWESKQES) is disordered. Polar residues predominate over residues 444-457 (KSSTSHWPTDNQDG). S471 is modified (phosphoserine). The catalytic stretch occupies residues 486–776 (IQEQALQKVG…VDPECLRWTP (291 aa)). Positions 502 to 776 (PQVRCPSVIE…VDPECLRWTP (275 aa)) constitute an MYST-type HAT domain. The mediates interaction with BRPF1, required for histone H3 acetyltransferase activity stretch occupies residues 505 to 808 (RCPSVIEFGK…EPQGQERELE (304 aa)). The segment at 535–560 (LYLCEFCLKYMKSRTILQQHMKKCGW) adopts a C2HC MYST-type zinc-finger fold. K602 bears the N6-acetyllysine; by autocatalysis mark. Acetyl-CoA contacts are provided by residues 643 to 647 (SCIMI) and 652 to 658 (QRKGYGR). Residue E678 is the Proton donor/acceptor of the active site. S682 is a binding site for acetyl-CoA. Residues 783 to 947 (VVSEEEDEEA…RFSESADLWR (165 aa)) form a disordered region. Position 785 is a phosphoserine (S785). Acidic residues predominate over residues 785–797 (SEEEDEEADDGEK). Over residues 798–840 (EEPQGQERELETRERVGKSVSRENKDQDSSSLIESEKKPEVKE) the composition is skewed to basic and acidic residues. N6-acetyllysine is present on K815. K835 participates in a covalent cross-link: Glycyl lysine isopeptide (Lys-Gly) (interchain with G-Cter in SUMO2). Basic residues predominate over residues 865 to 874 (RRGRCGRKNR). A compositionally biased stretch (basic and acidic residues) spans 875–886 (KTQERFGDKDSK). Phosphotyrosine is present on Y900. Residues 903–916 (CEEKSAASRERYTE) are compositionally biased toward basic and acidic residues. S940 and S953 each carry phosphoserine. The interval 982–1079 (GFSESSEEEE…EEEEDENELF (98 aa)) is disordered. At K1006 the chain carries N6-acetyllysine. The segment covering 1008–1029 (TLKRKKPILHRRRRVRKRKHHN) has biased composition (basic residues). Low complexity predominate over residues 1030 to 1041 (SSVVTETISETT). Composition is skewed to acidic residues over residues 1042 to 1052 (EVLDEPFEDSD) and 1064 to 1077 (FEIEEEEEEEDENE). S1088, S1089, and S1114 each carry phosphoserine. Disordered regions lie at residues 1096 to 1175 (QASS…PGFK), 1195 to 1436 (PIKP…EGAY), 1450 to 1567 (QSYT…STMG), and 1630 to 1702 (TCVV…CSMN). The span at 1106–1119 (DEEEEEEESDDADD) shows a compositional bias: acidic residues. Polar residues predominate over residues 1135-1146 (NSASLEPDTSTP). The segment covering 1147-1173 (MKKKKGWPKGKSRKPIHWKKRPGRKPG) has biased composition (basic residues). Over residues 1203-1228 (RTQESEELVEVKEGLVEERKEEMHTE) the composition is skewed to basic and acidic residues. Acidic residues-rich tracts occupy residues 1229 to 1240 (ADEEAEEEEDAA) and 1281 to 1298 (EEPQELEEQEQEEEDEVT). Composition is skewed to basic and acidic residues over residues 1316–1333 (HLDSLKTKEPEGQPARED), 1351–1360 (DSRENAKDKD), and 1392–1413 (DSNTKEELIELKEEEEIPHSEL). The segment covering 1472–1496 (HNSPISSIPSHPSQSVRSVSSPSMP) has biased composition (low complexity). A compositionally biased stretch (polar residues) spans 1501–1522 (GYTQISPEQGSLSAPSMQNMET). Positions 1510–1635 (GSLSAPSMQN…KSPQTCVVER (126 aa)) are interaction with RUNX1-2. The interaction with PML stretch occupies residues 1510–1735 (GSLSAPSMQN…YERIPGDFGA (226 aa)). The span at 1527–1541 (DVPSVSDHSQQVVDS) shows a compositional bias: low complexity. Over residues 1549–1567 (IESTTENYENPSSYDSTMG) the composition is skewed to polar residues. 2 stretches are compositionally biased toward pro residues: residues 1639-1658 (NQQPPPPPPPPPPPQQPQPQ) and 1665-1693 (PQPPPPQPQQQPPPPPQQQPQPPPPPQQQ). Residues 1907 to 1942 (SMNMNTLNAMNSYRMTQPMMNSSYHSNPAYMNQTAQ) are required for activation of RUNX1-2.

It belongs to the MYST (SAS/MOZ) family. As to quaternary structure, component of the MOZ/MORF complex composed at least of ING5, KAT6A, KAT6B, MEAF6 and one of BRPF1, BRD1/BRPF2 and BRPF3. Interacts with RUNX1; phosphorylation of RUNX1 enhances the interaction. Interacts with RUNX2. Interacts with p53/TP53. Interacts with PML and this interaction positively regulates its acetylation activity towards p53/TP53. Autoacetylated. Autoacetylation at Lys-602 is required for proper function. In terms of processing, phosphorylation at Thr-369 by PKB/AKT1 inhibits its interaction with PML and negatively regulates its acetylation activity towards p53/TP53.

The protein resides in the nucleus. It localises to the nucleolus. The protein localises to the nucleoplasm. Its subcellular location is the PML body. It carries out the reaction L-lysyl-[protein] + acetyl-CoA = N(6)-acetyl-L-lysyl-[protein] + CoA + H(+). Functionally, histone acetyltransferase that acetylates lysine residues in histone H3 and histone H4 (in vitro). Component of the MOZ/MORF complex which has a histone H3 acetyltransferase activity. May act as a transcriptional coactivator for RUNX1 and RUNX2. Acetylates p53/TP53 at 'Lys-120' and 'Lys-382' and controls its transcriptional activity via association with PML. This chain is Histone acetyltransferase KAT6A (Kat6a), found in Rattus norvegicus (Rat).